We begin with the raw amino-acid sequence, 221 residues long: Thyrotroph embryonic factor (221 aa).

The interval 72–116 (ESASSSTASPPSSSTAVFQPSETVSSTESSLEKERETPSPIDPNC) is disordered. Residues 73 to 100 (SASSSTASPPSSSTAVFQPSETVSSTES) are compositionally biased toward low complexity. A bZIP domain is found at 173–221 (DEKYWTRRKKNNVAAKRSRDARRLKENQITIRAAFLEKENTALRTEVAD). The segment at 175 to 195 (KYWTRRKKNNVAAKRSRDARR) is basic motif. The leucine-zipper stretch occupies residues 196–203 (LKENQITI).

The protein belongs to the bZIP family. PAR subfamily. Binds DNA as a homodimer or a heterodimer. Can form a heterodimer with DBP.

It is found in the nucleus. In terms of biological role, transcription factor that binds to and transactivates the TSHB promoter. Binds to a minimal DNA-binding sequence 5'-[TC][AG][AG]TTA[TC][AG]-3'. This chain is Thyrotroph embryonic factor (TEF), found in Phodopus sungorus (Striped hairy-footed hamster).